The following is a 122-amino-acid chain: MIKLRLKRFGKKREASFRLVACNSTSRRDGRPLQELGFYNPRTKETRLDTEALRLRLSQGAQPTDAVRSLLEKGGLIEKTVRPAEVVGKAKQAEARKAGAKNVAKQAAEAKAEETPADNTEA.

Residues 87–122 form a disordered region; sequence VGKAKQAEARKAGAKNVAKQAAEAKAEETPADNTEA.

The protein belongs to the bacterial ribosomal protein bS16 family.

The sequence is that of Small ribosomal subunit protein bS16 from Prochlorococcus marinus (strain MIT 9303).